The primary structure comprises 389 residues: S-adenosylmethionine synthase (389 aa).

An ATP-binding site is contributed by His17. A Mg(2+)-binding site is contributed by Asp19. Position 45 (Glu45) interacts with K(+). 2 residues coordinate L-methionine: Glu58 and Gln101. Positions 101–111 are flexible loop; sequence QSPDIAQGVTE. ATP is bound by residues 168-170, 234-235, Asp243, 249-250, Ala266, and Lys270; these read DSK, RF, and RK. Asp243 is a binding site for L-methionine. Position 274 (Lys274) interacts with L-methionine.

This sequence belongs to the AdoMet synthase family. Homotetramer; dimer of dimers. It depends on Mg(2+) as a cofactor. The cofactor is K(+).

The protein resides in the cytoplasm. The enzyme catalyses L-methionine + ATP + H2O = S-adenosyl-L-methionine + phosphate + diphosphate. The protein operates within amino-acid biosynthesis; S-adenosyl-L-methionine biosynthesis; S-adenosyl-L-methionine from L-methionine: step 1/1. Its function is as follows. Catalyzes the formation of S-adenosylmethionine (AdoMet) from methionine and ATP. The overall synthetic reaction is composed of two sequential steps, AdoMet formation and the subsequent tripolyphosphate hydrolysis which occurs prior to release of AdoMet from the enzyme. In Geotalea uraniireducens (strain Rf4) (Geobacter uraniireducens), this protein is S-adenosylmethionine synthase.